The sequence spans 157 residues: N-acetylgalactosamine-specific phosphotransferase enzyme IIB component 2 (157 aa).

The region spanning Met1 to Leu157 is the PTS EIIB type-4 domain. Residue His15 is the Pros-phosphohistidine intermediate of the active site.

It localises to the cytoplasm. Functionally, the phosphoenolpyruvate-dependent sugar phosphotransferase system (sugar PTS), a major carbohydrate active -transport system, catalyzes the phosphorylation of incoming sugar substrates concomitantly with their translocation across the cell membrane. This system is involved in N-acetylgalactosamine transport. The polypeptide is N-acetylgalactosamine-specific phosphotransferase enzyme IIB component 2 (agaV) (Escherichia coli (strain K12)).